A 430-amino-acid chain; its full sequence is C-terminal-binding protein 1 (430 aa).

Residues 1 to 59 (MSGVRPPIMNGPMHPRPLVALLDGRDCTVEMPILKDVATVAFCDAQSTQEIHEKVLNEA) form an interaction with GLIS2 1 region. NAD(+)-binding positions include S89, 169-174 (IGLGRV), D193, 226-232 (CGLNEHN), 253-255 (TAR), and D279. R255 is an active-site residue. An interaction with GLIS2 2 region spans residues 277-349 (ALDVHESEPF…VNKDHLTAAT (73 aa)). The active site involves E284. The residue at position 289 (S289) is a Phosphoserine. The active-site Proton donor is H304. A disordered region spans residues 398-430 (SHGLPPVAHPPHAPSPGQTVKPEADRDHTTDQL). S412 carries the phosphoserine modification. K418 is covalently cross-linked (Glycyl lysine isopeptide (Lys-Gly) (interchain with G-Cter in SUMO)). Over residues 419–430 (PEADRDHTTDQL) the composition is skewed to basic and acidic residues.

The protein belongs to the D-isomer specific 2-hydroxyacid dehydrogenase family. Homo- or heterodimer. Heterodimer with CTBP2. Interacts with ELK3 (via its PXDLS motif). Interacts with RBBP8 (via its PXDLS motif); the interaction is disrupted by binding to adenovirus E1A. Interacts with PNN, MECOM and ZFHX1B. Interacts with ZNF366 (via PXDLS motif). Interaction with SATB1 (non-acetylated form); the interaction stabilizes its attachment to DNA and promotes transcription repression. Interacts with PRDM16; the interaction represses white adipose tissue (WAT)-specific genes expression. Interacts with GLIS2, HIPK2, FOXP1, FOXP2, HDAC4, HDAC5, HDAC9, NRIP1 and WIZ. Interacts with ZNF217. Interacts with BCL6; the interaction is required for BCL6 transcriptional autoinhibition and inhibition of some BCL6 target genes. Interacts with IKZF4. Interacts with MCRIP1 (unphosphorylated form, via the PXDLS motif); competitively inhibiting CTBP-ZEB1 interaction. Interacts with Bassoon/BSN; this interaction targets and anchors CTBP1 to presynapses. Interacts with SIMC1. NAD(+) serves as cofactor. The level of phosphorylation appears to be regulated during the cell cycle. Phosphorylation by HIPK2 on Ser-412 induces proteasomal degradation. Post-translationally, ADP-ribosylated; when cells are exposed to brefeldin A. In terms of processing, sumoylation on Lys-418 is promoted by the E3 SUMO-protein ligase CBX4.

It is found in the cytoplasm. It localises to the nucleus. Its subcellular location is the synapse. The protein resides in the synaptosome. Its function is as follows. Corepressor targeting diverse transcription regulators such as GLIS2 or BCL6. Has dehydrogenase activity. Involved in controlling the equilibrium between tubular and stacked structures in the Golgi complex. Functions in brown adipose tissue (BAT) differentiation. The sequence is that of C-terminal-binding protein 1 (Ctbp1) from Rattus norvegicus (Rat).